The chain runs to 426 residues: Glutamate-1-semialdehyde 2,1-aminomutase (426 aa).

Lysine 265 bears the N6-(pyridoxal phosphate)lysine mark.

Belongs to the class-III pyridoxal-phosphate-dependent aminotransferase family. HemL subfamily. As to quaternary structure, homodimer. It depends on pyridoxal 5'-phosphate as a cofactor.

The protein localises to the cytoplasm. It carries out the reaction (S)-4-amino-5-oxopentanoate = 5-aminolevulinate. It functions in the pathway porphyrin-containing compound metabolism; protoporphyrin-IX biosynthesis; 5-aminolevulinate from L-glutamyl-tRNA(Glu): step 2/2. The sequence is that of Glutamate-1-semialdehyde 2,1-aminomutase from Yersinia enterocolitica serotype O:8 / biotype 1B (strain NCTC 13174 / 8081).